The chain runs to 739 residues: Catalase-peroxidase 1 (739 aa).

Residues 1-33 (MPEDRPIEDSPPIGEAQTDAPAGGCPAGFGRIK) form a disordered region. Positions 113 to 236 (WHAAGTYRVS…LAAVQMGLIY (124 aa)) form a cross-link, tryptophyl-tyrosyl-methioninium (Trp-Tyr) (with M-262). H114 serves as the catalytic Proton acceptor. A cross-link (tryptophyl-tyrosyl-methioninium (Tyr-Met) (with W-113)) is located at residues 236 to 262 (YVNPEGPNGNPDPQASAIDIRETFGRM). Heme b is bound at residue H277.

Belongs to the peroxidase family. Peroxidase/catalase subfamily. Homodimer or homotetramer. It depends on heme b as a cofactor. In terms of processing, formation of the three residue Trp-Tyr-Met cross-link is important for the catalase, but not the peroxidase activity of the enzyme.

The catalysed reaction is H2O2 + AH2 = A + 2 H2O. It carries out the reaction 2 H2O2 = O2 + 2 H2O. Its function is as follows. Bifunctional enzyme with both catalase and broad-spectrum peroxidase activity. May play a role in the intracellular survival of mycobacteria. This chain is Catalase-peroxidase 1, found in Mycolicibacterium smegmatis (strain ATCC 700084 / mc(2)155) (Mycobacterium smegmatis).